Consider the following 263-residue polypeptide: Leukocyte-associated immunoglobulin-like receptor 1 (263 aa).

Residues Met-1–Thr-21 form the signal peptide. The Extracellular segment spans residues Gln-22–Tyr-144. Residues Pro-27–Glu-115 enclose the Ig-like C2-type domain. 2 N-linked (GlcNAc...) asparagine glycosylation sites follow: Asn-34 and Asn-90. The cysteines at positions 49 and 99 are disulfide-linked. Residues Ile-145–Leu-165 form a helical membrane-spanning segment. Topologically, residues Arg-166 to His-263 are cytoplasmic. 2 short sequence motifs (ITIM motif) span residues Val-226–Leu-231 and Ser-255–Ile-260. A phosphotyrosine mark is found at Tyr-228 and Tyr-257.

As to quaternary structure, interacts with SH2 domains of tyrosine-protein phosphatases PTPN6 and PTPN11. The interaction with PTPN6 is constitutive. Interacts with the SH2 domain of CSK. Binds with high affinity to extracellular matrix collagens, the interaction is functionally important. Post-translationally, phosphorylation at Tyr-228 and Tyr-257 activates it. May be phosphorylated by LCK. N-glycosylated. Expressed in lymphoid organs and in cell lines of hemopoietic origin.

The protein resides in the cell membrane. Functionally, functions as an inhibitory receptor that plays a constitutive negative regulatory role on cytolytic function of natural killer (NK) cells, B-cells and T-cells. Activation by Tyr phosphorylation results in recruitment and activation of the phosphatases PTPN6 and PTPN11. It also reduces the increase of intracellular calcium evoked by B-cell receptor ligation. May also play its inhibitory role independently of SH2-containing phosphatases. Modulates cytokine production in CD4+ T-cells, down-regulating IL2 and IFNG production while inducing secretion of transforming growth factor beta. Also down-regulates IgG and IgE production in B-cells as well as IL8, IL10 and TNF secretion. Inhibits proliferation and induces apoptosis in myeloid leukemia cell lines as well as prevents nuclear translocation of NF-kappa-B p65 subunit/RELA and phosphorylation of I-kappa-B alpha/CHUK in these cells. Inhibits the differentiation of peripheral blood precursors towards dendritic cells. This is Leukocyte-associated immunoglobulin-like receptor 1 (Lair1) from Mus musculus (Mouse).